The primary structure comprises 105 residues: Nucleoid-associated protein RPC_4847 (105 aa).

This sequence belongs to the YbaB/EbfC family. As to quaternary structure, homodimer.

It is found in the cytoplasm. Its subcellular location is the nucleoid. Its function is as follows. Binds to DNA and alters its conformation. May be involved in regulation of gene expression, nucleoid organization and DNA protection. This Rhodopseudomonas palustris (strain BisB18) protein is Nucleoid-associated protein RPC_4847.